A 115-amino-acid chain; its full sequence is Holo-[acyl-carrier-protein] synthase (115 aa).

Mg(2+) contacts are provided by D6 and E51.

This sequence belongs to the P-Pant transferase superfamily. AcpS family. It depends on Mg(2+) as a cofactor.

Its subcellular location is the cytoplasm. It catalyses the reaction apo-[ACP] + CoA = holo-[ACP] + adenosine 3',5'-bisphosphate + H(+). Functionally, transfers the 4'-phosphopantetheine moiety from coenzyme A to a Ser of acyl-carrier-protein. The polypeptide is Holo-[acyl-carrier-protein] synthase (Campylobacter jejuni (strain RM1221)).